Here is a 371-residue protein sequence, read N- to C-terminus: uncharacterized protein (371 aa).

7 consecutive transmembrane segments (helical) span residues 9 to 29 (FTLDNIIQIGISLAILLVFLI), 58 to 78 (VLAFDKPARWFFVALGLFLAI), 98 to 118 (LIVALLCWGLCNLTATSSFIF), 133 to 153 (LAPFLSKLLRFVIIALSVSVI), 159 to 179 (YDVNGFVAGLGLGGLAFALAA), 183 to 203 (ISNFFGGIIIITEKPFTIGDW), and 330 to 350 (IIEILGAEGVQFAYPGQMVVV).

The protein belongs to the MscS (TC 1.A.23) family.

It is found in the cell membrane. Functionally, may play a role in resistance to osmotic downshock. This is an uncharacterized protein from Bacillus subtilis (strain 168).